We begin with the raw amino-acid sequence, 796 residues long: Peroxisome proliferator-activated receptor gamma coactivator 1-alpha (796 aa).

N6-acetyllysine is present on Lys-77. Residues 98–138 form a disordered region; the sequence is PVDEDGLPSFDALTDGDVTTDNEASPSSMPDGTPPPQEAEE. The span at 114-127 shows a compositional bias: polar residues; the sequence is DVTTDNEASPSSMP. The short motif at 142–146 is the LXXLL motif element; sequence LKKLL. Lys-144 carries the N6-acetyllysine modification. Thr-176 bears the Phosphothreonine; by AMPK mark. Lys-182 bears the N6-acetyllysine mark. The segment at 211–275 is disordered; the sequence is YLTTNDDPPH…NDPKGSPFEN (65 aa). Positions 217 to 235 are enriched in basic and acidic residues; that stretch reads DPPHTKPTENRNSSRDKCA. The span at 242 to 258 shows a compositional bias: polar residues; it reads TQPQSQHAQAKPTTLSL. 8 positions are modified to N6-acetyllysine: Lys-252, Lys-269, Lys-276, Lys-319, Lys-345, Lys-411, Lys-440, and Lys-449. The segment at 288–350 is disordered; sequence GTAGLTPPTT…HSTKKGPEQS (63 aa). Residues 291-337 form an interaction with PPARG region; the sequence is GLTPPTTPPHKANQDNPFKASPKLKPSCKTVVPPPTKRARYSECSGT. The mediates interaction with RNF34 stretch occupies residues 348 to 796; it reads EQSELYAQLS…LKEAQRSLRR (449 aa). Ser-537 is subject to Phosphoserine; by AMPK. 2 disordered regions span residues 541–597 and 611–669; these read FNSP…SSRS and HRNS…QKQK. Basic residues predominate over residues 561 to 576; it reads QRMRSRSRSFSRHRSC. Over residues 577-597 the composition is skewed to low complexity; the sequence is SRSPYSRSRSRSPGSRSSSRS. Over residues 620–629 the composition is skewed to basic residues; the sequence is SRSRSPYSRR. Residues 630 to 669 show a composition bias toward basic and acidic residues; that stretch reads PRYDSYEANEHERLKRDEYRREYEKRESERAKQRERQKQK. The region spanning 675–751 is the RRM domain; it reads RVIYVGKIRP…TDFELYFCGR (77 aa). An N6-acetyllysine mark is found at Lys-756 and Lys-777.

Homooligomer. Interacts with MYBBP1A; inhibits MYBBP1A transcriptional activation. Interacts with PRDM16, LPIN1 and PML. Interacts (via LXXLL motif) with RORA and RORC (via AF-2 motif); activates RORA and RORC transcriptional activation. Interacts with LRPPRC. Interacts with FOXO1. Interacts with NR5A2. In terms of processing, phosphorylation by AMPK in skeletal muscle increases activation of its own promoter. Phosphorylated by CLK2. Heavily acetylated by KAT2A/GCN5 under conditions of high nutrients, leading to inactivation of PPARGC1A. Deacetylated by SIRT1 in low nutrients/high NAD conditions, leading to its activation. Post-translationally, ubiquitinated. Ubiquitination by RNF34 induces proteasomal degradation.

Its subcellular location is the nucleus. It is found in the PML body. Functionally, transcriptional coactivator for steroid receptors and nuclear receptors. Greatly increases the transcriptional activity of PPARG and thyroid hormone receptor on the uncoupling protein promoter. Can regulate key mitochondrial genes that contribute to the program of adaptive thermogenesis. Plays an essential role in metabolic reprogramming in response to dietary availability through coordination of the expression of a wide array of genes involved in glucose and fatty acid metabolism. Acts as a key regulator of gluconeogenesis: stimulates hepatic gluconeogenesis by increasing the expression of gluconeogenic enzymes, and acting together with FOXO1 to promote the fasting gluconeogenic program. Induces the expression of PERM1 in the skeletal muscle in an ESRRA-dependent manner. Also involved in the integration of the circadian rhythms and energy metabolism. Required for oscillatory expression of clock genes, such as BMAL1 and NR1D1, through the coactivation of RORA and RORC, and metabolic genes, such as PDK4 and PEPCK. The protein is Peroxisome proliferator-activated receptor gamma coactivator 1-alpha (Ppargc1a) of Rattus norvegicus (Rat).